Here is a 153-residue protein sequence, read N- to C-terminus: Endoribonuclease YbeY (153 aa).

Positions 118, 122, and 128 each coordinate Zn(2+).

Belongs to the endoribonuclease YbeY family. The cofactor is Zn(2+).

The protein resides in the cytoplasm. Its function is as follows. Single strand-specific metallo-endoribonuclease involved in late-stage 70S ribosome quality control and in maturation of the 3' terminus of the 16S rRNA. This Chloroflexus aggregans (strain MD-66 / DSM 9485) protein is Endoribonuclease YbeY.